Consider the following 243-residue polypeptide: Uridylate kinase (243 aa).

15-18 (KISG) lines the ATP pocket. Residue glycine 57 coordinates UMP. Positions 58 and 62 each coordinate ATP. UMP is bound by residues aspartate 77 and 138 to 145 (TGNPFFTT). Residues threonine 165, phenylalanine 171, and aspartate 174 each contribute to the ATP site.

Belongs to the UMP kinase family. As to quaternary structure, homohexamer.

It is found in the cytoplasm. It carries out the reaction UMP + ATP = UDP + ADP. It participates in pyrimidine metabolism; CTP biosynthesis via de novo pathway; UDP from UMP (UMPK route): step 1/1. With respect to regulation, inhibited by UTP. In terms of biological role, catalyzes the reversible phosphorylation of UMP to UDP. In Blochmanniella floridana, this protein is Uridylate kinase.